We begin with the raw amino-acid sequence, 367 residues long: Diphthine methyltransferase homolog (367 aa).

WD repeat units follow at residues 84–124 (NFNS…KKLE), 132–173 (SLSN…SKVT), 180–220 (AHDY…NHND), and 234–274 (RCDM…QPII).

It belongs to the DPH7 family.

The enzyme catalyses diphthine methyl ester-[translation elongation factor 2] + H2O = diphthine-[translation elongation factor 2] + methanol + H(+). It participates in protein modification; peptidyl-diphthamide biosynthesis. Its function is as follows. Catalyzes the demethylation of diphthine methyl ester to form diphthine, an intermediate diphthamide biosynthesis, a post-translational modification of histidine which occurs in translation elongation factor 2 (efbA). This chain is Diphthine methyltransferase homolog (wdr85), found in Dictyostelium discoideum (Social amoeba).